A 443-amino-acid polypeptide reads, in one-letter code: Glutamate-1-semialdehyde 2,1-aminomutase (443 aa).

Over residues 1–16 (MSVNADSQHSNNSSHQ) the composition is skewed to low complexity. A disordered region spans residues 1–22 (MSVNADSQHSNNSSHQASEKAF). An N6-(pyridoxal phosphate)lysine modification is found at Lys-277.

It belongs to the class-III pyridoxal-phosphate-dependent aminotransferase family. HemL subfamily. In terms of assembly, homodimer. Pyridoxal 5'-phosphate serves as cofactor.

The protein resides in the cytoplasm. It catalyses the reaction (S)-4-amino-5-oxopentanoate = 5-aminolevulinate. The protein operates within porphyrin-containing compound metabolism; protoporphyrin-IX biosynthesis; 5-aminolevulinate from L-glutamyl-tRNA(Glu): step 2/2. This chain is Glutamate-1-semialdehyde 2,1-aminomutase, found in Corynebacterium jeikeium (strain K411).